A 349-amino-acid chain; its full sequence is N-acetyltaurine hydrolase (349 aa).

A divalent metal cation-binding residues include histidine 26, histidine 28, glutamate 169, histidine 201, histidine 230, and aspartate 298.

Belongs to the metallo-dependent hydrolases superfamily. Phosphotriesterase family. It depends on a divalent metal cation as a cofactor.

It is found in the cytoplasm. The protein localises to the cytosol. It carries out the reaction N-acetyltaurine + H2O = taurine + acetate. The enzyme catalyses N-propanoyltaurine + H2O = propanoate + taurine. It catalyses the reaction N-acetyl-L-methionine + H2O = L-methionine + acetate. The catalysed reaction is N-acetyl-L-isoleucine + H2O = L-isoleucine + acetate. It carries out the reaction N-acetyl-L-leucine + H2O = L-leucine + acetate. The enzyme catalyses N-acetyl-L-valine + H2O = L-valine + acetate. N-acetyltaurine hydrolase that regulates feeding by catalyzing the hydrolysis of N-acetyltaurine into taurine and acetate. N-acetyltaurine has anorexigenic and anti-obesity effects that are dependent on GFRAL receptor and GDF15. PTER also acts on other N-acetyl amino acids (Met, Ile, Leu, Val) and N-propionyltaurine, but at lower rates. The polypeptide is N-acetyltaurine hydrolase (Pongo abelii (Sumatran orangutan)).